The primary structure comprises 119 residues: Flagellar transcriptional regulator FlhD (119 aa).

It belongs to the FlhD family. As to quaternary structure, homodimer; disulfide-linked. Forms a heterohexamer composed of two FlhC and four FlhD subunits. Each FlhC binds a FlhD dimer, forming a heterotrimer, and a hexamer assembles by dimerization of two heterotrimers.

It localises to the cytoplasm. Functions in complex with FlhC as a master transcriptional regulator that regulates transcription of several flagellar and non-flagellar operons by binding to their promoter region. Activates expression of class 2 flagellar genes, including fliA, which is a flagellum-specific sigma factor that turns on the class 3 genes. Also regulates genes whose products function in a variety of physiological pathways. This chain is Flagellar transcriptional regulator FlhD, found in Pectobacterium atrosepticum (strain SCRI 1043 / ATCC BAA-672) (Erwinia carotovora subsp. atroseptica).